The chain runs to 143 residues: Large ribosomal subunit protein uL11 (143 aa).

It belongs to the universal ribosomal protein uL11 family. As to quaternary structure, part of the ribosomal stalk of the 50S ribosomal subunit. Interacts with L10 and the large rRNA to form the base of the stalk. L10 forms an elongated spine to which L12 dimers bind in a sequential fashion forming a multimeric L10(L12)X complex. In terms of processing, one or more lysine residues are methylated.

In terms of biological role, forms part of the ribosomal stalk which helps the ribosome interact with GTP-bound translation factors. The protein is Large ribosomal subunit protein uL11 of Dechloromonas aromatica (strain RCB).